Reading from the N-terminus, the 214-residue chain is Adenylate kinase (214 aa).

ATP is bound at residue 14-19 (GSGKGT). Positions 34–63 (SSGDLFRSAIKSATPLGSKAAEYINKGLLV) are NMP. AMP-binding positions include Ser-35, Arg-40, 61 to 63 (LLV), 89 to 92 (GFPR), and Gln-96. An LID region spans residues 130-163 (SRFICPACNYVYNQSQGFKECPTCHVALIRRSDD). ATP is bound at residue Arg-131. Zn(2+) is bound by residues Cys-134 and Cys-137. 140-141 (VY) is an ATP binding site. Zn(2+) is bound by residues Cys-150 and Cys-153. 2 residues coordinate AMP: Arg-160 and Arg-171. Position 199 (Thr-199) interacts with ATP.

The protein belongs to the adenylate kinase family. Monomer.

The protein resides in the cytoplasm. It catalyses the reaction AMP + ATP = 2 ADP. Its pathway is purine metabolism; AMP biosynthesis via salvage pathway; AMP from ADP: step 1/1. Functionally, catalyzes the reversible transfer of the terminal phosphate group between ATP and AMP. Plays an important role in cellular energy homeostasis and in adenine nucleotide metabolism. The chain is Adenylate kinase from Chlamydia caviae (strain ATCC VR-813 / DSM 19441 / 03DC25 / GPIC) (Chlamydophila caviae).